The sequence spans 255 residues: Alkaline ceramidase (255 aa).

Residues 1–28 (MADGISSFWGPVTSTIECCEMNYAYSSY) lie on the Lumenal side of the membrane. Residues 29 to 49 (IAEFYNTISNVPGILLALIGL) traverse the membrane as a helical segment. Topologically, residues 50-60 (VNALRQRFEKR) are cytoplasmic. A helical membrane pass occupies residues 61 to 81 (FSILHISNMILAIGSMLYHAT). Histidine 79 serves as a coordination point for Zn(2+). Residues 82–91 (LQHVQQQSDE) lie on the Lumenal side of the membrane. Residues 92–112 (TPMVWEILLYMYILYSPDWHY) traverse the membrane as a helical segment. The Cytoplasmic portion of the chain corresponds to 113-118 (RSTMPT). 2 helical membrane passes run 119 to 139 (FLFL…FGIG) and 140 to 160 (FKVH…KYYI). The Cytoplasmic portion of the chain corresponds to 161–169 (HTEDTAAKR). Residues 170-192 (IAKWYVATILVGSICWFCDRVFC) traverse the membrane as a helical segment. Residues 193–205 (KTISQWPVNPQGH) lie on the Lumenal side of the membrane. Zn(2+)-binding residues include histidine 205 and histidine 209. The chain crosses the membrane as a helical span at residues 206–226 (ALWHVFMSFNSYCANTFLMFC). Residues 227–255 (RAQQRGWNPKVKYFLGVLPYVKIEKPKTQ) are Cytoplasmic-facing.

The protein belongs to the alkaline ceramidase family. Requires Zn(2+) as cofactor. As to expression, mostly expressed in roots, shoot meristems and pollen, and, to a lower extent, in mature leaves.

The protein resides in the endoplasmic reticulum membrane. The protein localises to the golgi apparatus membrane. Hydrolyzes only phytoceramide into phytosphingosine and free fatty acid. Does not have reverse activity. Affects plant morphogenesis. Required for the formation of wax layer that ensure cuticle permeability. Implicated in abscisic acid (ABA)-mediated stomatal closure. Involved in both biotic and abiotic stresses. Promotes salt resistance and defenses responses toward pathogenic bacteria (e.g. P.syringae) and against the fungal toxin fumonisin B1 (FB1). The sequence is that of Alkaline ceramidase from Arabidopsis thaliana (Mouse-ear cress).